Here is a 91-residue protein sequence, read N- to C-terminus: MPLHKSAEKRLRQSARRNERNRARKKELKVLLKTVQKLVDTNADKKEVEAAYRSAIQKLDRLGVKRYIHPNKASRKKSQLSRMLNNYMKAE.

The segment covering 1-21 (MPLHKSAEKRLRQSARRNERN) has biased composition (basic and acidic residues). Disordered regions lie at residues 1–25 (MPLHKSAEKRLRQSARRNERNRARK) and 70–91 (PNKASRKKSQLSRMLNNYMKAE). The span at 70 to 79 (PNKASRKKSQ) shows a compositional bias: basic residues.

It belongs to the bacterial ribosomal protein bS20 family.

In terms of biological role, binds directly to 16S ribosomal RNA. This chain is Small ribosomal subunit protein bS20, found in Chlorobium phaeobacteroides (strain BS1).